We begin with the raw amino-acid sequence, 253 residues long: 5'-nucleotidase SurE (253 aa).

The a divalent metal cation site is built by D8, D9, S39, and N92.

This sequence belongs to the SurE nucleotidase family. A divalent metal cation serves as cofactor.

The protein localises to the cytoplasm. It catalyses the reaction a ribonucleoside 5'-phosphate + H2O = a ribonucleoside + phosphate. Its function is as follows. Nucleotidase that shows phosphatase activity on nucleoside 5'-monophosphates. This is 5'-nucleotidase SurE from Burkholderia vietnamiensis (strain G4 / LMG 22486) (Burkholderia cepacia (strain R1808)).